The chain runs to 125 residues: Small ribosomal subunit protein uS13 (125 aa).

The tract at residues 92-125 (RRSLPVRGQRTQTNARTRKGKRKTVAGKKKATKK) is disordered. The span at 107-125 (RTRKGKRKTVAGKKKATKK) shows a compositional bias: basic residues.

It belongs to the universal ribosomal protein uS13 family. In terms of assembly, part of the 30S ribosomal subunit. Forms a loose heterodimer with protein S19. Forms two bridges to the 50S subunit in the 70S ribosome.

Functionally, located at the top of the head of the 30S subunit, it contacts several helices of the 16S rRNA. In the 70S ribosome it contacts the 23S rRNA (bridge B1a) and protein L5 of the 50S subunit (bridge B1b), connecting the 2 subunits; these bridges are implicated in subunit movement. Contacts the tRNAs in the A and P-sites. The protein is Small ribosomal subunit protein uS13 of Chlorobium limicola (strain DSM 245 / NBRC 103803 / 6330).